Reading from the N-terminus, the 350-residue chain is MTVSPVALRRKTECKPHPTARYWKKCDVEALFGLPFLELVYQAAEVHRQNFNPREIQLSTLLSIKTGGCPEDCAYCPQSAHHNTNLGKEQMMDVDEIVEKAKIAKSRGASRFCMGAAWRGPKPKDVETVSAIIKAVKGLGMETCGTFGMLEEGMAEDLKEAGLDYYNHNLDTDPDRYNDIIHTRRHEDRMDTLGKVRNAGLKVCCGGIVGMNETRAERAGLIASLANLDPQPESVPINRLVKVEGTPLADAEDLDWTEFVRTVSVARITMPQSYVRLSAGRSNMPEAMQAMCFMAGANSIFYGDKLLTTGNPDEDGDRILMEKLNLYPLQFEPEGEVAEVEKASGIKADY.

The 225-residue stretch at 54 to 278 (REIQLSTLLS…TMPQSYVRLS (225 aa)) folds into the Radical SAM core domain. [4Fe-4S] cluster-binding residues include Cys-69, Cys-73, and Cys-76. Residues Cys-113, Cys-144, Cys-204, and Arg-276 each contribute to the [2Fe-2S] cluster site.

It belongs to the radical SAM superfamily. Biotin synthase family. Homodimer. [4Fe-4S] cluster is required as a cofactor. It depends on [2Fe-2S] cluster as a cofactor.

It catalyses the reaction (4R,5S)-dethiobiotin + (sulfur carrier)-SH + 2 reduced [2Fe-2S]-[ferredoxin] + 2 S-adenosyl-L-methionine = (sulfur carrier)-H + biotin + 2 5'-deoxyadenosine + 2 L-methionine + 2 oxidized [2Fe-2S]-[ferredoxin]. It participates in cofactor biosynthesis; biotin biosynthesis; biotin from 7,8-diaminononanoate: step 2/2. Catalyzes the conversion of dethiobiotin (DTB) to biotin by the insertion of a sulfur atom into dethiobiotin via a radical-based mechanism. The chain is Biotin synthase from Neisseria gonorrhoeae (strain ATCC 700825 / FA 1090).